The chain runs to 313 residues: C-type lectin domain-containing protein 162 (313 aa).

Residues 1–17 (MNIFTLLFIYFLSDTVA) form the signal peptide. 2 N-linked (GlcNAc...) asparagine glycosylation sites follow: Asn28 and Asn41. The 118-residue stretch at 28–145 (NATGCFQFFR…DAMFLPFVCE (118 aa)) folds into the C-type lectin domain. Cys49 and Cys144 are oxidised to a cystine. The N-linked (GlcNAc...) asparagine glycan is linked to Asn213. The segment at 244-313 (VSQTETEMSR…RSKTIQISRG (70 aa)) is disordered. The segment covering 250 to 259 (EMSRSRKEKE) has biased composition (basic and acidic residues). N-linked (GlcNAc...) asparagine glycosylation is found at Asn279 and Asn300. Positions 291 to 304 (SKEKREREENETIR) are enriched in basic and acidic residues.

It localises to the secreted. The chain is C-type lectin domain-containing protein 162 (clec-162) from Caenorhabditis elegans.